The sequence spans 224 residues: Deoxyribose-phosphate aldolase (224 aa).

D94 (proton donor/acceptor) is an active-site residue. K156 (schiff-base intermediate with acetaldehyde) is an active-site residue. K184 acts as the Proton donor/acceptor in catalysis.

The protein belongs to the DeoC/FbaB aldolase family. DeoC type 1 subfamily.

The protein localises to the cytoplasm. The enzyme catalyses 2-deoxy-D-ribose 5-phosphate = D-glyceraldehyde 3-phosphate + acetaldehyde. Its pathway is carbohydrate degradation; 2-deoxy-D-ribose 1-phosphate degradation; D-glyceraldehyde 3-phosphate and acetaldehyde from 2-deoxy-alpha-D-ribose 1-phosphate: step 2/2. Catalyzes a reversible aldol reaction between acetaldehyde and D-glyceraldehyde 3-phosphate to generate 2-deoxy-D-ribose 5-phosphate. The chain is Deoxyribose-phosphate aldolase from Methanocella arvoryzae (strain DSM 22066 / NBRC 105507 / MRE50).